We begin with the raw amino-acid sequence, 474 residues long: Dol-P-Glc:Glc(2)Man(9)GlcNAc(2)-PP-Dol alpha-1,2-glucosyltransferase (474 aa).

Residues Met-1–Gly-6 lie on the Cytoplasmic side of the membrane. The chain crosses the membrane as a helical span at residues Tyr-7–Phe-27. Over Ser-28 to Thr-64 the chain is Extracellular. The helical transmembrane segment at Leu-65–Trp-85 threads the bilayer. Over Ser-86 to Arg-97 the chain is Cytoplasmic. A helical membrane pass occupies residues Phe-98–Val-118. Residues Gln-119–Ser-126 are Extracellular-facing. The helical transmembrane segment at Ser-127–Asn-147 threads the bilayer. Over Phe-148 to Tyr-150 the chain is Cytoplasmic. A helical membrane pass occupies residues Tyr-151–Asn-171. Residues His-172–Ser-175 lie on the Extracellular side of the membrane. The helical transmembrane segment at Ala-176–Cys-196 threads the bilayer. The Cytoplasmic portion of the chain corresponds to Ala-197 to Trp-256. Residues Pro-257–Val-277 form a helical membrane-spanning segment. Residues Gly-278–His-283 lie on the Extracellular side of the membrane. The helical transmembrane segment at Glu-284–Phe-304 threads the bilayer. Residues Pro-305–Leu-317 are Cytoplasmic-facing. A helical transmembrane segment spans residues Ser-318–Val-338. The Extracellular portion of the chain corresponds to Trp-339–Gln-365. The helical transmembrane segment at Arg-366–Ala-386 threads the bilayer. Over Asp-387–Lys-392 the chain is Cytoplasmic. The chain crosses the membrane as a helical span at residues Ser-393 to Leu-413. The Extracellular segment spans residues Leu-414 to Ser-436. Residues Arg-437–Leu-457 traverse the membrane as a helical segment. Over Asn-458–Met-473 the chain is Cytoplasmic.

The protein belongs to the ALG10 glucosyltransferase family. Interacts with KCNH1; may regulate KCNH1, possibly by regulating its N-glycosylation. Interacts with KCNH2; may reduce KCNH2 sensitivity to classic proarrhythmic drug blockade, possibly by regulating its N-glycosylation.

The protein resides in the endoplasmic reticulum membrane. It catalyses the reaction an alpha-D-Glc-(1-&gt;3)-alpha-D-Glc-(1-&gt;3)-alpha-D-Man-(1-&gt;2)-alpha-D-Man-(1-&gt;2)-alpha-D-Man-(1-&gt;3)-[alpha-D-Man-(1-&gt;2)-alpha-D-Man-(1-&gt;3)-[alpha-D-Man-(1-&gt;2)-alpha-D-Man-(1-&gt;6)]-alpha-D-Man-(1-&gt;6)]-beta-D-Man-(1-&gt;4)-beta-D-GlcNAc-(1-&gt;4)-alpha-D-GlcNAc-diphospho-di-trans,poly-cis-dolichol + a di-trans,poly-cis-dolichyl beta-D-glucosyl phosphate = a alpha-D-Glc-(1-&gt;2)-alpha-D-Glc-(1-&gt;3)-alpha-D-Glc-(1-&gt;3)-alpha-D-Man-(1-&gt;2)-alpha-D-Man-(1-&gt;2)-alpha-D-Man-(1-&gt;3)-[alpha-D-Man-(1-&gt;2)-alpha-D-Man-(1-&gt;3)-[alpha-D-Man-(1-&gt;2)-alpha-D-Man-(1-&gt;6)]-alpha-D-Man-(1-&gt;6)]-beta-D-Man-(1-&gt;4)-beta-D-GlcNAc-(1-&gt;4)-alpha-D-GlcNAc-diphospho-di-trans,poly-cis-dolichol + a di-trans,poly-cis-dolichyl phosphate + H(+). It participates in protein modification; protein glycosylation. Dol-P-Glc:Glc(2)Man(9)GlcNAc(2)-PP-Dol alpha-1,2-glucosyltransferase that operates in the biosynthetic pathway of dolichol-linked oligosaccharides, the glycan precursors employed in protein asparagine (N)-glycosylation. The assembly of dolichol-linked oligosaccharides begins on the cytosolic side of the endoplasmic reticulum membrane and finishes in its lumen. The sequential addition of sugars to dolichol pyrophosphate produces dolichol-linked oligosaccharides containing fourteen sugars, including two GlcNAcs, nine mannoses and three glucoses. Once assembled, the oligosaccharide is transferred from the lipid to nascent proteins by oligosaccharyltransferases. In the lumen of the endoplasmic reticulum, adds the third and last glucose residue from dolichyl phosphate glucose (Dol-P-Glc) onto the lipid-linked oligosaccharide intermediate Glc(2)Man(9)GlcNAc(2)-PP-Dol to produce Glc(3)Man(9)GlcNAc(2)-PP-Dol. This Mus musculus (Mouse) protein is Dol-P-Glc:Glc(2)Man(9)GlcNAc(2)-PP-Dol alpha-1,2-glucosyltransferase.